Here is a 430-residue protein sequence, read N- to C-terminus: Histidine--tRNA ligase (430 aa).

It belongs to the class-II aminoacyl-tRNA synthetase family. As to quaternary structure, homodimer.

It localises to the cytoplasm. It carries out the reaction tRNA(His) + L-histidine + ATP = L-histidyl-tRNA(His) + AMP + diphosphate + H(+). The chain is Histidine--tRNA ligase from Chlorobium limicola (strain DSM 245 / NBRC 103803 / 6330).